A 450-amino-acid polypeptide reads, in one-letter code: Malate:quinone oxidoreductase (450 aa).

The protein belongs to the MQO family. The cofactor is FAD.

It is found in the cell membrane. It catalyses the reaction (S)-malate + a quinone = a quinol + oxaloacetate. It functions in the pathway carbohydrate metabolism; tricarboxylic acid cycle; oxaloacetate from (S)-malate (quinone route): step 1/1. Functionally, catalyzes oxidation of malate to oxaloacetate in the citric acid cycle. Donates electrons to quinones of the electron transfer chain. This chain is Malate:quinone oxidoreductase (mqo), found in Helicobacter pylori (strain J99 / ATCC 700824) (Campylobacter pylori J99).